The following is a 721-amino-acid chain: Fatty acid oxidation complex subunit alpha (721 aa).

Residues 1 to 190 are enoyl-CoA hydratase/isomerase; that stretch reads MIYEGKAITV…KVGAVDAVVA (190 aa). A substrate-binding site is contributed by Asp-297. Positions 312-721 are 3-hydroxyacyl-CoA dehydrogenase; the sequence is KDVKQAAVLG…SFFGQASSEE (410 aa). Residues Met-325, Asp-344, 401-403, Lys-408, and Ser-430 each bind NAD(+); that span reads VVE. The active-site For 3-hydroxyacyl-CoA dehydrogenase activity is the His-451. Asn-454 is a binding site for NAD(+). Residues Asn-501 and Tyr-660 each contribute to the substrate site.

It in the N-terminal section; belongs to the enoyl-CoA hydratase/isomerase family. In the C-terminal section; belongs to the 3-hydroxyacyl-CoA dehydrogenase family. In terms of assembly, heterotetramer of two alpha chains (FadB) and two beta chains (FadA).

The catalysed reaction is a (3S)-3-hydroxyacyl-CoA + NAD(+) = a 3-oxoacyl-CoA + NADH + H(+). The enzyme catalyses a (3S)-3-hydroxyacyl-CoA = a (2E)-enoyl-CoA + H2O. It catalyses the reaction a 4-saturated-(3S)-3-hydroxyacyl-CoA = a (3E)-enoyl-CoA + H2O. It carries out the reaction (3S)-3-hydroxybutanoyl-CoA = (3R)-3-hydroxybutanoyl-CoA. The catalysed reaction is a (3Z)-enoyl-CoA = a 4-saturated (2E)-enoyl-CoA. The enzyme catalyses a (3E)-enoyl-CoA = a 4-saturated (2E)-enoyl-CoA. It functions in the pathway lipid metabolism; fatty acid beta-oxidation. Functionally, involved in the aerobic and anaerobic degradation of long-chain fatty acids via beta-oxidation cycle. Catalyzes the formation of 3-oxoacyl-CoA from enoyl-CoA via L-3-hydroxyacyl-CoA. It can also use D-3-hydroxyacyl-CoA and cis-3-enoyl-CoA as substrate. The sequence is that of Fatty acid oxidation complex subunit alpha from Pseudomonas syringae pv. syringae (strain B728a).